We begin with the raw amino-acid sequence, 293 residues long: Aspartate carbamoyltransferase catalytic subunit (293 aa).

Carbamoyl phosphate contacts are provided by Arg-50 and Thr-51. Lys-78 lines the L-aspartate pocket. Positions 100, 127, and 130 each coordinate carbamoyl phosphate. L-aspartate contacts are provided by Arg-160 and Arg-210. Residues Ala-253 and Pro-254 each contribute to the carbamoyl phosphate site.

Belongs to the aspartate/ornithine carbamoyltransferase superfamily. ATCase family. As to quaternary structure, heterododecamer (2C3:3R2) of six catalytic PyrB chains organized as two trimers (C3), and six regulatory PyrI chains organized as three dimers (R2).

The catalysed reaction is carbamoyl phosphate + L-aspartate = N-carbamoyl-L-aspartate + phosphate + H(+). It participates in pyrimidine metabolism; UMP biosynthesis via de novo pathway; (S)-dihydroorotate from bicarbonate: step 2/3. Its function is as follows. Catalyzes the condensation of carbamoyl phosphate and aspartate to form carbamoyl aspartate and inorganic phosphate, the committed step in the de novo pyrimidine nucleotide biosynthesis pathway. The protein is Aspartate carbamoyltransferase catalytic subunit of Staphylococcus epidermidis (strain ATCC 12228 / FDA PCI 1200).